A 239-amino-acid polypeptide reads, in one-letter code: MDFFSTHNILIHIPIGAGGYDLSWIEAVGTIAGLLCIWLASLEKISNYFFGLVNVTLFAIIFFQIQLYASLLLQLFFFAANIYGWYAWSRQTKDNQAELKIRWLPLPKAMAWLAICVIAIGLMTRYIDPVFAVLTRVAVAIMQMLGLQVTMPVLQPDAFPFWDSCMMVLSIVAMILMTRKYVENWLLWVIINVISVVIFALQGVYAMSLEYLILTFIAVNGSRLWINSARERGSRALSR.

Residues 1 to 21 (MDFFSTHNILIHIPIGAGGYD) lie on the Cytoplasmic side of the membrane. A helical transmembrane segment spans residues 22–42 (LSWIEAVGTIAGLLCIWLASL). Topologically, residues 43–48 (EKISNY) are periplasmic. Residues 49–68 (FFGLVNVTLFAIIFFQIQLY) traverse the membrane as a helical segment. At 69-71 (ASL) the chain is on the cytoplasmic side. Residues 72–89 (LLQLFFFAANIYGWYAWS) traverse the membrane as a helical segment. Topologically, residues 90 to 109 (RQTKDNQAELKIRWLPLPKA) are periplasmic. The chain crosses the membrane as a helical span at residues 110–127 (MAWLAICVIAIGLMTRYI). The Cytoplasmic segment spans residues 128–157 (DPVFAVLTRVAVAIMQMLGLQVTMPVLQPD). Residues 158 to 177 (AFPFWDSCMMVLSIVAMILM) traverse the membrane as a helical segment. At 178–183 (TRKYVE) the chain is on the periplasmic side. Residues 184–206 (NWLLWVIINVISVVIFALQGVYA) traverse the membrane as a helical segment. W188 and N192 together coordinate beta-nicotinamide D-riboside. At 207 to 239 (MSLEYLILTFIAVNGSRLWINSARERGSRALSR) the chain is on the cytoplasmic side.

This sequence belongs to the nicotinamide ribonucleoside (NR) uptake permease (TC 4.B.1) family.

The protein resides in the cell inner membrane. In terms of biological role, required for nicotinamide riboside transport across the inner membrane. This Salmonella typhimurium (strain LT2 / SGSC1412 / ATCC 700720) protein is Nicotinamide riboside transporter PnuC (pnuC).